The sequence spans 514 residues: GTPase-activating protein gyp1 (514 aa).

Disordered stretches follow at residues 17–65 (LWNG…QPPK) and 130–164 (LPRM…LHSS). Composition is skewed to polar residues over residues 18–28 (WNGSSSATSDP) and 135–158 (RSTT…TTSR). One can recognise a Rab-GAP TBC domain in the interval 216-443 (GIPSEHRPIV…RMWDTYMAEG (228 aa)).

The protein resides in the golgi apparatus. It localises to the golgi stack. Its subcellular location is the cytoplasm. It is found in the nucleus. Its function is as follows. Stimulates specifically the GTPase activity of ypt1. Functions on the Golgi as a negative regulator of ypt1. This chain is GTPase-activating protein gyp1, found in Schizosaccharomyces pombe (strain 972 / ATCC 24843) (Fission yeast).